The primary structure comprises 762 residues: Polyribonucleotide nucleotidyltransferase (762 aa).

Residues Asp-531 and Asp-537 each coordinate Mg(2+). The region spanning Pro-597 to Ile-656 is the KH domain. The region spanning Gly-668–Val-737 is the S1 motif domain.

Belongs to the polyribonucleotide nucleotidyltransferase family. Mg(2+) is required as a cofactor.

Its subcellular location is the cytoplasm. It catalyses the reaction RNA(n+1) + phosphate = RNA(n) + a ribonucleoside 5'-diphosphate. Its function is as follows. Involved in mRNA degradation. Catalyzes the phosphorolysis of single-stranded polyribonucleotides processively in the 3'- to 5'-direction. This Mycobacterium marinum (strain ATCC BAA-535 / M) protein is Polyribonucleotide nucleotidyltransferase.